The chain runs to 515 residues: Histidine ammonia-lyase (515 aa).

A cross-link (5-imidazolinone (Ala-Gly)) is located at residues alanine 142 to glycine 144. Residue serine 143 is modified to 2,3-didehydroalanine (Ser).

This sequence belongs to the PAL/histidase family. In terms of processing, contains an active site 4-methylidene-imidazol-5-one (MIO), which is formed autocatalytically by cyclization and dehydration of residues Ala-Ser-Gly.

The protein localises to the cytoplasm. The catalysed reaction is L-histidine = trans-urocanate + NH4(+). It functions in the pathway amino-acid degradation; L-histidine degradation into L-glutamate; N-formimidoyl-L-glutamate from L-histidine: step 1/3. The sequence is that of Histidine ammonia-lyase from Bradyrhizobium sp. (strain ORS 278).